We begin with the raw amino-acid sequence, 695 residues long: UvrABC system protein B (695 aa).

In terms of domain architecture, Helicase ATP-binding spans 31–414 (EGIESGLSFQ…EIQRSGQIAE (384 aa)). 44 to 51 (GVTGSGKT) serves as a coordination point for ATP. The Beta-hairpin signature appears at 97–120 (YYDYYQPEAYVPSRDLFIEKDSSI). One can recognise a Helicase C-terminal domain in the interval 435–601 (QVDDLMSEVS…GVNKRIKDLI (167 aa)). Positions 632 to 667 (AKEIQRLEKSMLEAARNMEFEQAAQYRDEIKNLRSK) constitute a UVR domain.

It belongs to the UvrB family. As to quaternary structure, forms a heterotetramer with UvrA during the search for lesions. Interacts with UvrC in an incision complex.

The protein resides in the cytoplasm. In terms of biological role, the UvrABC repair system catalyzes the recognition and processing of DNA lesions. A damage recognition complex composed of 2 UvrA and 2 UvrB subunits scans DNA for abnormalities. Upon binding of the UvrA(2)B(2) complex to a putative damaged site, the DNA wraps around one UvrB monomer. DNA wrap is dependent on ATP binding by UvrB and probably causes local melting of the DNA helix, facilitating insertion of UvrB beta-hairpin between the DNA strands. Then UvrB probes one DNA strand for the presence of a lesion. If a lesion is found the UvrA subunits dissociate and the UvrB-DNA preincision complex is formed. This complex is subsequently bound by UvrC and the second UvrB is released. If no lesion is found, the DNA wraps around the other UvrB subunit that will check the other stand for damage. In Nitrosomonas europaea (strain ATCC 19718 / CIP 103999 / KCTC 2705 / NBRC 14298), this protein is UvrABC system protein B.